The sequence spans 277 residues: Diaminopimelate epimerase (277 aa).

Residues asparagine 13, glutamine 46, and asparagine 66 each coordinate substrate. Residue cysteine 75 is the Proton donor of the active site. Substrate contacts are provided by residues 76-77 (GN), asparagine 160, asparagine 193, and 211-212 (ER). Cysteine 220 serves as the catalytic Proton acceptor. 221-222 (GS) is a substrate binding site.

The protein belongs to the diaminopimelate epimerase family. In terms of assembly, homodimer.

The protein resides in the cytoplasm. It catalyses the reaction (2S,6S)-2,6-diaminopimelate = meso-2,6-diaminopimelate. Its pathway is amino-acid biosynthesis; L-lysine biosynthesis via DAP pathway; DL-2,6-diaminopimelate from LL-2,6-diaminopimelate: step 1/1. Its function is as follows. Catalyzes the stereoinversion of LL-2,6-diaminopimelate (L,L-DAP) to meso-diaminopimelate (meso-DAP), a precursor of L-lysine and an essential component of the bacterial peptidoglycan. The sequence is that of Diaminopimelate epimerase from Legionella pneumophila (strain Corby).